A 64-amino-acid polypeptide reads, in one-letter code: Large ribosomal subunit protein uL30 (64 aa).

It belongs to the universal ribosomal protein uL30 family. Part of the 50S ribosomal subunit.

This chain is Large ribosomal subunit protein uL30, found in Rhodopseudomonas palustris (strain BisB18).